The primary structure comprises 394 residues: Ornithine aminotransferase 1 (394 aa).

K252 is modified (N6-(pyridoxal phosphate)lysine).

This sequence belongs to the class-III pyridoxal-phosphate-dependent aminotransferase family. OAT subfamily. Requires pyridoxal 5'-phosphate as cofactor.

It is found in the cytoplasm. It carries out the reaction a 2-oxocarboxylate + L-ornithine = L-glutamate 5-semialdehyde + an L-alpha-amino acid. It participates in amino-acid biosynthesis; L-proline biosynthesis; L-glutamate 5-semialdehyde from L-ornithine: step 1/1. Catalyzes the interconversion of ornithine to glutamate semialdehyde. This chain is Ornithine aminotransferase 1, found in Staphylococcus aureus (strain MRSA252).